The primary structure comprises 274 residues: Bis(5'-nucleosyl)-tetraphosphatase, symmetrical (274 aa).

The protein belongs to the Ap4A hydrolase family.

The enzyme catalyses P(1),P(4)-bis(5'-adenosyl) tetraphosphate + H2O = 2 ADP + 2 H(+). In terms of biological role, hydrolyzes diadenosine 5',5'''-P1,P4-tetraphosphate to yield ADP. The chain is Bis(5'-nucleosyl)-tetraphosphatase, symmetrical from Shewanella baltica (strain OS223).